The following is a 282-amino-acid chain: BURP domain-containing protein BNM2A (282 aa).

Positions methionine 1 to alanine 26 are cleaved as a signal peptide. A BURP domain is found at phenylalanine 60 to lysine 282.

As to expression, expressed in the radicle and cotyledon of germinating seeds 2 days post-imbibition (DPI), in stems and roots of 30-DPI young plants and in floral buds, but not in fully open flowers or leaves. Expressed in the embryo and seed coat tissues of developing seeds. The protein accumulates only in seeds and only long after transcript accumulation becomes evident.

Its subcellular location is the protein storage vacuole. The chain is BURP domain-containing protein BNM2A from Brassica napus (Rape).